The following is a 504-amino-acid chain: Topoisomerase I damage affected protein 11 (504 aa).

Residues 32-62 are disordered; the sequence is RKTGRKIRSASSNGYRLEHHRTSSAGSMHSQ. Positions 179–231 form a coiled coil; sequence ALLQSLATKELELLECKQKIEDLKKQTQHEEQNYTRRARELHELKEQVSKHLD. The residue at position 236 (threonine 236) is a Phosphothreonine. 2 positions are modified to phosphoserine: serine 244 and serine 286. 3 disordered regions span residues 252 to 306, 332 to 377, and 400 to 504; these read LESR…SKQS, WDDS…SVSR, and DVIT…MTDF. Residues 257–287 are compositionally biased toward polar residues; sequence ENAGNSSLPSSVSKPKNMGHQSTNQSRSVSP. Over residues 290 to 301 the composition is skewed to basic and acidic residues; sequence IQERRQRDDSSD. Polar residues-rich tracts occupy residues 332 to 359 and 368 to 377; these read WDDS…QQYD and KSPSQGSVSR. A compositionally biased stretch (basic and acidic residues) spans 403–421; the sequence is TDNRCDPVYKSDRQHEQKK. A compositionally biased stretch (basic residues) spans 470–479; that stretch reads TREKKSKRSS. The segment covering 491-504 has biased composition (polar residues); that stretch reads DNSSVKNSVEMTDF.

Belongs to the TDA11 family.

The protein localises to the cytoplasm. The chain is Topoisomerase I damage affected protein 11 (TDA11) from Saccharomyces cerevisiae (strain ATCC 204508 / S288c) (Baker's yeast).